Reading from the N-terminus, the 907-residue chain is Protein translocase subunit SecA (907 aa).

Residues Gln-87, 105-109, and Asp-511 each bind ATP; that span reads GEGKT. Positions 891, 893, 902, and 903 each coordinate Zn(2+).

This sequence belongs to the SecA family. In terms of assembly, monomer and homodimer. Part of the essential Sec protein translocation apparatus which comprises SecA, SecYEG and auxiliary proteins SecDF-YajC and YidC. It depends on Zn(2+) as a cofactor.

Its subcellular location is the cell inner membrane. The protein localises to the cytoplasm. The catalysed reaction is ATP + H2O + cellular proteinSide 1 = ADP + phosphate + cellular proteinSide 2.. Its function is as follows. Part of the Sec protein translocase complex. Interacts with the SecYEG preprotein conducting channel. Has a central role in coupling the hydrolysis of ATP to the transfer of proteins into and across the cell membrane, serving both as a receptor for the preprotein-SecB complex and as an ATP-driven molecular motor driving the stepwise translocation of polypeptide chains across the membrane. The sequence is that of Protein translocase subunit SecA from Aromatoleum aromaticum (strain DSM 19018 / LMG 30748 / EbN1) (Azoarcus sp. (strain EbN1)).